We begin with the raw amino-acid sequence, 425 residues long: UDP-N-acetylglucosamine 1-carboxyvinyltransferase (425 aa).

22-23 contacts phosphoenolpyruvate; the sequence is KN. Residue Arg98 participates in UDP-N-acetyl-alpha-D-glucosamine binding. Cys122 serves as the catalytic Proton donor. Position 122 is a 2-(S-cysteinyl)pyruvic acid O-phosphothioketal (Cys122). Residues 127 to 131, Asp313, and Ile335 each bind UDP-N-acetyl-alpha-D-glucosamine; that span reads RPVDQ.

The protein belongs to the EPSP synthase family. MurA subfamily.

The protein localises to the cytoplasm. The enzyme catalyses phosphoenolpyruvate + UDP-N-acetyl-alpha-D-glucosamine = UDP-N-acetyl-3-O-(1-carboxyvinyl)-alpha-D-glucosamine + phosphate. It functions in the pathway cell wall biogenesis; peptidoglycan biosynthesis. In terms of biological role, cell wall formation. Adds enolpyruvyl to UDP-N-acetylglucosamine. The polypeptide is UDP-N-acetylglucosamine 1-carboxyvinyltransferase (Xylella fastidiosa (strain M12)).